A 250-amino-acid polypeptide reads, in one-letter code: MRIPWLEADTPFPPAEQALKEPNGLLAAGGELNTDRLRAAYAKGIFPWYSEGEPLLWWSPDPRMVLACADFAPSHSLRKTLRRLARAEQAGDTRIQVRVDTAFARVMAACAGRRDGQAGTWITPEVQAAYCAWHEQGQAHSIETWIDDHLVGGLYGISLGGMFFGESMFAHATDASKIALAYLVAFLTRHEVDWIDCQQQTRHLASLGARPLPRAQFLQHVARVLAKPAPPWRVGVLRHAGDIVDSANQR.

It belongs to the L/F-transferase family.

It localises to the cytoplasm. It catalyses the reaction N-terminal L-lysyl-[protein] + L-leucyl-tRNA(Leu) = N-terminal L-leucyl-L-lysyl-[protein] + tRNA(Leu) + H(+). It carries out the reaction N-terminal L-arginyl-[protein] + L-leucyl-tRNA(Leu) = N-terminal L-leucyl-L-arginyl-[protein] + tRNA(Leu) + H(+). The catalysed reaction is L-phenylalanyl-tRNA(Phe) + an N-terminal L-alpha-aminoacyl-[protein] = an N-terminal L-phenylalanyl-L-alpha-aminoacyl-[protein] + tRNA(Phe). Its function is as follows. Functions in the N-end rule pathway of protein degradation where it conjugates Leu, Phe and, less efficiently, Met from aminoacyl-tRNAs to the N-termini of proteins containing an N-terminal arginine or lysine. The sequence is that of Leucyl/phenylalanyl-tRNA--protein transferase from Bordetella avium (strain 197N).